The primary structure comprises 656 residues: Protein arginine N-methyltransferase 7 (656 aa).

2 SAM-dependent MTase PRMT-type domains span residues 12 to 338 (EREW…FSIW) and 343 to 656 (GKDS…QSGN).

This sequence belongs to the class I-like SAM-binding methyltransferase superfamily. Protein arginine N-methyltransferase family. PRMT7 subfamily.

Its function is as follows. Arginine methyltransferase that can both catalyze the formation of omega-N monomethylarginine (MMA) and symmetrical dimethylarginine (sDMA). This is Protein arginine N-methyltransferase 7 (prmt-7) from Caenorhabditis briggsae.